A 701-amino-acid polypeptide reads, in one-letter code: Elongation factor G (701 aa).

Residues 8–286 enclose the tr-type G domain; it reads ERIRNIGIIA…AVVYYLPSPV (279 aa). GTP-binding positions include 17-24, 85-89, and 139-142; these read AHIDAGKT, DTPGH, and NKMD.

This sequence belongs to the TRAFAC class translation factor GTPase superfamily. Classic translation factor GTPase family. EF-G/EF-2 subfamily.

The protein resides in the cytoplasm. Catalyzes the GTP-dependent ribosomal translocation step during translation elongation. During this step, the ribosome changes from the pre-translocational (PRE) to the post-translocational (POST) state as the newly formed A-site-bound peptidyl-tRNA and P-site-bound deacylated tRNA move to the P and E sites, respectively. Catalyzes the coordinated movement of the two tRNA molecules, the mRNA and conformational changes in the ribosome. The protein is Elongation factor G of Roseiflexus castenholzii (strain DSM 13941 / HLO8).